The primary structure comprises 389 residues: Succinate--CoA ligase [ADP-forming] subunit beta (389 aa).

The region spanning 9 to 236 (KELFAKHGVP…RDATDPLELK (228 aa)) is the ATP-grasp domain. ATP contacts are provided by residues Lys-45, 52–54 (GRG), Ser-94, and Glu-99. The Mg(2+) site is built by Asn-191 and Asp-205. Substrate is bound by residues Asn-256 and 318 to 320 (GIT).

The protein belongs to the succinate/malate CoA ligase beta subunit family. As to quaternary structure, heterotetramer of two alpha and two beta subunits. The cofactor is Mg(2+).

The catalysed reaction is succinate + ATP + CoA = succinyl-CoA + ADP + phosphate. It carries out the reaction GTP + succinate + CoA = succinyl-CoA + GDP + phosphate. Its pathway is carbohydrate metabolism; tricarboxylic acid cycle; succinate from succinyl-CoA (ligase route): step 1/1. In terms of biological role, succinyl-CoA synthetase functions in the citric acid cycle (TCA), coupling the hydrolysis of succinyl-CoA to the synthesis of either ATP or GTP and thus represents the only step of substrate-level phosphorylation in the TCA. The beta subunit provides nucleotide specificity of the enzyme and binds the substrate succinate, while the binding sites for coenzyme A and phosphate are found in the alpha subunit. The chain is Succinate--CoA ligase [ADP-forming] subunit beta from Rhodococcus erythropolis (strain PR4 / NBRC 100887).